The following is a 1123-amino-acid chain: uncharacterized protein (1123 aa).

Disordered stretches follow at residues 136-229 (LGES…PKLT), 262-471 (MLQY…LNQH), 483-514 (LSSI…SPNL), 527-609 (KKIN…QSDD), 629-769 (SILC…NNIS), 782-812 (LKPK…NSSS), 835-1005 (ITNN…GESN), and 1070-1099 (NNNN…NNNI). Residues 166-185 (GGNGGNSGTNGDGDDGGCSL) are compositionally biased toward gly residues. Positions 190–199 (DENDYEDGMV) are enriched in acidic residues. Gly residues predominate over residues 211 to 223 (SGDGGGGGGGGGD). Low complexity predominate over residues 262–322 (MLQYQQQQQQ…TTTTHSNNSN (61 aa)). Positions 329 to 343 (PLNNSNSNIHFLTNQ) are enriched in polar residues. Low complexity-rich tracts occupy residues 344–387 (QNSD…SNLN), 397–464 (STST…SSSS), 489–499 (NNKENNNNNNN), 527–548 (KKIN…NISS), and 563–585 (HQQQ…QQHQ). The span at 590-604 (SKSSSELQVPSSNYH) shows a compositional bias: polar residues. Residues 632-646 (CKDDSKTNTNKDKDN) show a composition bias toward basic and acidic residues. Low complexity-rich tracts occupy residues 647-707 (NNSN…INNN) and 727-769 (SVSS…NNIS). Over residues 790-799 (SSPSIPTTSP) the composition is skewed to polar residues. Low complexity-rich tracts occupy residues 835-984 (ITNN…NNNI) and 1070-1098 (NNNN…NNNN).

This is an uncharacterized protein from Dictyostelium discoideum (Social amoeba).